A 947-amino-acid chain; its full sequence is Probable outer membrane protein pmp19 (947 aa).

The signal sequence occupies residues 1-19; sequence MKQMRLWGFLFLSSFCQVS. Residues 672 to 947 form the Autotransporter domain; sequence IPLQHLCVFG…NAHAGLSLSF (276 aa).

This sequence belongs to the PMP outer membrane protein family.

The protein localises to the secreted. It is found in the cell wall. Its subcellular location is the cell outer membrane. This chain is Probable outer membrane protein pmp19 (pmp19), found in Chlamydia pneumoniae (Chlamydophila pneumoniae).